A 487-amino-acid chain; its full sequence is Glutamate mutase epsilon subunit (487 aa).

R62 contributes to the L-glutamate binding site. G64 contacts adenosylcob(III)alamin. Residue R96 coordinates L-glutamate. Residue N119 coordinates adenosylcob(III)alamin. L-glutamate-binding positions include 145-146 (RH), E167, and Y173. Residue P176 coordinates adenosylcob(III)alamin. Y177 is an L-glutamate binding site. Adenosylcob(III)alamin contacts are provided by F289, K318, and E322. Residues 465 to 487 (SDGKLIGRPGGDNSPAGGASDAD) are disordered.

This sequence belongs to the methylaspartate mutase GlmE subunit family. As to quaternary structure, heterotetramer composed of 2 epsilon subunits (GlmE) and 2 sigma subunits (GlmS). GlmE exists as a homodimer and GlmS as a monomer. Requires adenosylcob(III)alamin as cofactor.

It catalyses the reaction (2S,3S)-3-methyl-L-aspartate = L-glutamate. It functions in the pathway amino-acid degradation; L-glutamate degradation via mesaconate pathway; acetate and pyruvate from L-glutamate: step 1/4. Functionally, catalyzes the carbon skeleton rearrangement of L-glutamate to L-threo-3-methylaspartate ((2S,3S)-3-methylaspartate). This Haloarcula marismortui (strain ATCC 43049 / DSM 3752 / JCM 8966 / VKM B-1809) (Halobacterium marismortui) protein is Glutamate mutase epsilon subunit.